The primary structure comprises 876 residues: Valine--tRNA ligase (876 aa).

Residues 44–54 carry the 'HIGH' region motif; that stretch reads PNVTGKLHLGH. The short motif at 520–524 is the 'KMSKS' region element; sequence KMSKS. Position 523 (K523) interacts with ATP. Residues 805–876 are a coiled coil; it reads LEGLIDMDKE…VKARIEQLKA (72 aa).

This sequence belongs to the class-I aminoacyl-tRNA synthetase family. ValS type 1 subfamily. In terms of assembly, monomer.

The protein resides in the cytoplasm. It catalyses the reaction tRNA(Val) + L-valine + ATP = L-valyl-tRNA(Val) + AMP + diphosphate. Its function is as follows. Catalyzes the attachment of valine to tRNA(Val). As ValRS can inadvertently accommodate and process structurally similar amino acids such as threonine, to avoid such errors, it has a 'posttransfer' editing activity that hydrolyzes mischarged Thr-tRNA(Val) in a tRNA-dependent manner. The sequence is that of Valine--tRNA ligase from Staphylococcus aureus (strain bovine RF122 / ET3-1).